A 325-amino-acid polypeptide reads, in one-letter code: Cytochrome c biogenesis protein CcsA (325 aa).

8 helical membrane passes run threonine 14–leucine 34, glycine 36–leucine 56, isoleucine 68–leucine 88, leucine 97–leucine 117, valine 142–valine 162, valine 233–asparagine 253, tryptophan 260–leucine 280, and alanine 294–leucine 314.

This sequence belongs to the CcmF/CycK/Ccl1/NrfE/CcsA family. May interact with ccs1.

Its subcellular location is the cellular thylakoid membrane. Functionally, required during biogenesis of c-type cytochromes (cytochrome c6 and cytochrome f) at the step of heme attachment. In Synechococcus sp. (strain ATCC 27144 / PCC 6301 / SAUG 1402/1) (Anacystis nidulans), this protein is Cytochrome c biogenesis protein CcsA.